The primary structure comprises 372 residues: Prostaglandin E synthase 2 (372 aa).

Residues 1–54 (MAHAVRALWPHGRALAWRLGDRPALGLHAQSRAGFTGAAGGSGPAATARKGGPR) lie on the Lumenal side of the membrane. Residues 55–71 (LLGAAALALGGALGLYH) traverse the membrane as a helical segment. At 72–372 (TARWHLRAQD…VEKAIAEAPQ (301 aa)) the chain is on the cytoplasmic side. Residues 87-190 (SATQLSLSSR…DIITYYPPMK (104 aa)) enclose the Glutaredoxin domain. Residue Ser-92 is modified to Phosphoserine. Residues Val-145 and 161–162 (DS) contribute to the glutathione site. The 114-residue stretch at 259–372 (DYIVKEGNFG…VEKAIAEAPQ (114 aa)) folds into the GST C-terminal domain.

The protein belongs to the GST superfamily. May interact with CEBPB. Interacts with EXOSC10. Homodimer. Post-translationally, synthesized as a Golgi membrane-associated protein, and the proteolytic removal of the N-terminal hydrophobic domain leads to the formation of a mature cytosolic enzyme. In terms of tissue distribution, detected in heart (at protein level). Widely expressed. Expressed in heart &gt; kidney &gt; muscle &gt; testis &gt; endometrium = ovary &gt; myometrium = spleen = lung. In endometrium, it is mainly expressed in luminal epithelial cells followed by glandular epithelial cells, but expression is also present in stromal cells at a lower level.

The protein localises to the microsome membrane. Its subcellular location is the cytoplasm. The catalysed reaction is prostaglandin H2 = prostaglandin E2. The enzyme catalyses prostaglandin H2 = (12S)-hydroxy-(5Z,8E,10E)-heptadecatrienoate + malonaldehyde. Its pathway is lipid metabolism; prostaglandin biosynthesis. Its activity is regulated as follows. Isomerase activity is increased by sulfhydril compounds. Dithiothreitol (DTT) is most effective, followed by glutathione (GSH) and 2-mercaptoethanol. Isomerase that catalyzes the conversion of PGH2 into the more stable prostaglandin E2 (PGE2) (in vitro). The biological function and the GSH-dependent property of PTGES2 is still under debate. In vivo, PTGES2 could form a complex with GSH and heme and would not participate in PGE2 synthesis but would catalyze the degradation of prostaglandin E2 H2 (PGH2) to 12(S)-hydroxy-5(Z),8(E),10(E)-heptadecatrienoic acid (HHT) and malondialdehyde (MDA). This chain is Prostaglandin E synthase 2 (PTGES2), found in Bos taurus (Bovine).